The primary structure comprises 714 residues: Polynucleotide 5'-hydroxyl-kinase NOL9 (714 aa).

Position 2 is an N-acetylalanine (A2). Residues 31-47 carry the Nucleolar localization signal motif; that stretch reads RRGRRRFGVLTRVELRR. The tract at residues 80 to 133 is disordered; sequence ARSRPAPRSPPTPSVPPAPCTASATCSLLNPRNHSTPQSRAGRPVRKVSPNVTQ. The span at 86-98 shows a compositional bias: pro residues; that stretch reads PRSPPTPSVPPAP. A compositionally biased stretch (polar residues) spans 107–118; sequence LLNPRNHSTPQS. Phosphoserine is present on S128. 322–329 contacts ATP; that stretch reads GACDIGKS. The interval 495 to 714 is interaction with LAS1L; sequence FTYEEKESSP…PRHKLRQRRK (220 aa). Residue K500 forms a Glycyl lysine isopeptide (Lys-Gly) (interchain with G-Cter in SUMO2) linkage. The residue at position 502 (S502) is a Phosphoserine.

It belongs to the Clp1 family. NOL9/GRC3 subfamily. As to quaternary structure, interacts with PELP1, WDR18 and SENP3. Interacts with LAS1L to form an ITS2 pre-rRNA endonuclease-kinase complex.

It is found in the nucleus. The protein localises to the nucleolus. It carries out the reaction a 5'-end dephospho-2'-deoxyribonucleoside-DNA + ATP = a 5'-end 5'-phospho-2'-deoxyribonucleoside-DNA + ADP + H(+). It catalyses the reaction a 5'-end dephospho-ribonucleoside-RNA + ATP = a 5'-end 5'-phospho-ribonucleoside-RNA + ADP + H(+). Functionally, polynucleotide kinase that can phosphorylate the 5'-hydroxyl groups of single-stranded and double-stranded RNA and DNA substrates. Involved in rRNA processing and its kinase activity is required for the processing of the 32S precursor into 5.8S and 28S rRNAs, more specifically for the generation of the major 5.8S(S) form. Required for the efficient pre-rRNA processing of internal transcribed spacer 2 (ITS2). Associates with LAS1L to form an ITS2 pre-rRNA endonuclease-kinase complex and is responsible for the transport of this complex into the nucleolus. This is Polynucleotide 5'-hydroxyl-kinase NOL9 from Mus musculus (Mouse).